Consider the following 671-residue polypeptide: MADKKRYEELINILDQYSYDYYVIDNPTVEDAEYDQKMQELLKIEEAHPEWVTPESPSKRVGGEVLEGFKKVAHDTPMLSLANAFNQEDLADFDRRIRDKVGDDIAYMCELKIDGLAVSLQYENGKYKQGATRGDGTIGEDITANLRTIRSIPMKLQKDYSIEVRGEAFMPKRSFQKLNEIREEEGQMLFANPRNAAAGSLRQLDTKIAASRNLDIFLYAVADFGEMGVETHSAGLDMLETLGLKVNKERRLCNSLEEVYAYIEEWTEKRAGLAYDIDGIVLKLNNLEQQRQMGNTVKSPRWSIAYKFPAEEVPTKLLDIELNVGRTGVITPTAVLEPVRVAGTTVSRASLHNEDLITEKDIRIGDTVLIKKAGDIIPEVIKSITEKRSGSEEPFHMPKNCPACDSELVRLEEEVALRCINPKCPAQIKEGLIHFVSRNAMNIDGLGEKVIIQLFSQHLIKDVADLFFLSKEKLLELERMGEKSVTNLLASIQASKQNSLEKLLFGLGIRHVGAKAAKSLAIHFDTMDNLKVADKETLTSINDIGEKMADSIVTYFANEEVHDLLEELKRAGVNMTYTGPKLEDMSEEELVFTGKTVVLTGKLEKLTRNDAKALIESLGGNVSGSVSKKTDVVVAGSDAGSKLAKAEELAIPIWSEEDLIEYLPDEGGLNE.

NAD(+)-binding positions include 31–35 (DAEYD), 80–81 (SL), and E110. K112 serves as the catalytic N6-AMP-lysine intermediate. R133, E167, K283, and K307 together coordinate NAD(+). Zn(2+) contacts are provided by C401, C404, C419, and C424. The 85-residue stretch at 587–671 (EEELVFTGKT…YLPDEGGLNE (85 aa)) folds into the BRCT domain.

It belongs to the NAD-dependent DNA ligase family. LigA subfamily. It depends on Mg(2+) as a cofactor. Requires Mn(2+) as cofactor.

It catalyses the reaction NAD(+) + (deoxyribonucleotide)n-3'-hydroxyl + 5'-phospho-(deoxyribonucleotide)m = (deoxyribonucleotide)n+m + AMP + beta-nicotinamide D-nucleotide.. Functionally, DNA ligase that catalyzes the formation of phosphodiester linkages between 5'-phosphoryl and 3'-hydroxyl groups in double-stranded DNA using NAD as a coenzyme and as the energy source for the reaction. It is essential for DNA replication and repair of damaged DNA. This chain is DNA ligase, found in Listeria monocytogenes serotype 4b (strain F2365).